A 614-amino-acid polypeptide reads, in one-letter code: Probable LRR receptor-like serine/threonine-protein kinase At5g63710 (614 aa).

A signal peptide spans 1–50 (MAHSGNGESFHDPLRGFIQRNCFRWNNQKLILQCFMALAFVGITSSTTQP). Topologically, residues 51–224 (DIEGGALLQL…VTSSKKKLRD (174 aa)) are extracellular. Residues Asn-65, Asn-125, Asn-146, and Asn-175 are each glycosylated (N-linked (GlcNAc...) asparagine). LRR repeat units follow at residues 115 to 139 (LKFL…LGNM), 141 to 163 (NLQT…WSQL), and 164 to 187 (SNLK…FFSI). The chain crosses the membrane as a helical span at residues 225–245 (ITLTASCVASIILFLGAMVMY). The Cytoplasmic portion of the chain corresponds to 246-613 (HHHRVRRTKY…DQESIRLSTA (368 aa)). Thr-286 bears the Phosphothreonine mark. Residues 289-573 (FNESNLIGQG…GTGGLAEKWT (285 aa)) enclose the Protein kinase domain. Residue 295-303 (IGQGGFGKV) coordinates ATP. The residue at position 312 (Thr-312) is a Phosphothreonine. Residue Lys-317 coordinates ATP. At Ser-370 the chain carries Phosphoserine. Thr-389 is modified (phosphothreonine). Asp-416 acts as the Proton acceptor in catalysis. Thr-449, Thr-450, and Thr-455 each carry phosphothreonine. The residue at position 463 (Tyr-463) is a Phosphotyrosine. Thr-466 is modified (phosphothreonine). Position 470 is a phosphoserine (Ser-470). Thr-545 carries the phosphothreonine modification.

Belongs to the protein kinase superfamily. Ser/Thr protein kinase family.

Its subcellular location is the cell membrane. The enzyme catalyses L-seryl-[protein] + ATP = O-phospho-L-seryl-[protein] + ADP + H(+). The catalysed reaction is L-threonyl-[protein] + ATP = O-phospho-L-threonyl-[protein] + ADP + H(+). The chain is Probable LRR receptor-like serine/threonine-protein kinase At5g63710 from Arabidopsis thaliana (Mouse-ear cress).